Consider the following 122-residue polypeptide: Large ribosomal subunit protein uL14 (122 aa).

The protein belongs to the universal ribosomal protein uL14 family. As to quaternary structure, part of the 50S ribosomal subunit. Forms a cluster with proteins L3 and L19. In the 70S ribosome, L14 and L19 interact and together make contacts with the 16S rRNA in bridges B5 and B8.

Binds to 23S rRNA. Forms part of two intersubunit bridges in the 70S ribosome. This chain is Large ribosomal subunit protein uL14, found in Thiobacillus denitrificans (strain ATCC 25259 / T1).